The chain runs to 444 residues: Glucarate dehydratase (444 aa).

Substrate contacts are provided by histidine 30, threonine 101, tyrosine 148, and lysine 203. Lysine 205 serves as the catalytic Proton acceptor. Positions 233, 264, and 287 each coordinate Mg(2+). 233–235 (DPN) lines the substrate pocket. Residues asparagine 287, 337 to 339 (HSN), histidine 366, and arginine 420 contribute to the substrate site. Histidine 337 (proton acceptor) is an active-site residue.

Belongs to the mandelate racemase/muconate lactonizing enzyme family. GlucD subfamily. Mg(2+) is required as a cofactor.

The catalysed reaction is D-glucarate = 5-dehydro-4-deoxy-D-glucarate + H2O. Its pathway is carbohydrate acid metabolism; D-glucarate degradation; 2,5-dioxopentanoate from D-glucarate: step 1/2. In terms of biological role, catalyzes the dehydration of glucarate to 5-keto-4-deoxy-D-glucarate (5-kdGluc). This is Glucarate dehydratase (gudD) from Acinetobacter baylyi (strain ATCC 33305 / BD413 / ADP1).